The chain runs to 1416 residues: DNA-directed RNA polymerase subunit beta' (1416 aa).

Zn(2+) is bound by residues cysteine 71, cysteine 73, cysteine 86, and cysteine 89. Mg(2+) contacts are provided by aspartate 461, aspartate 463, and aspartate 465. Residues cysteine 815, cysteine 889, cysteine 896, and cysteine 899 each coordinate Zn(2+).

It belongs to the RNA polymerase beta' chain family. In terms of assembly, the RNAP catalytic core consists of 2 alpha, 1 beta, 1 beta' and 1 omega subunit. When a sigma factor is associated with the core the holoenzyme is formed, which can initiate transcription. Mg(2+) is required as a cofactor. It depends on Zn(2+) as a cofactor.

It catalyses the reaction RNA(n) + a ribonucleoside 5'-triphosphate = RNA(n+1) + diphosphate. DNA-dependent RNA polymerase catalyzes the transcription of DNA into RNA using the four ribonucleoside triphosphates as substrates. In Haemophilus influenzae (strain PittGG), this protein is DNA-directed RNA polymerase subunit beta'.